The sequence spans 261 residues: N-acetyltransferase ECO1 (261 aa).

A CCHH-type zinc finger spans residues 29-53 (LKCPKCEMKYSPNSIDDVATHKKYH). Positions 102 to 261 (VMIQENKPAE…SGHILIPCYL (160 aa)) constitute an N-acetyltransferase domain.

It belongs to the acetyltransferase family. ECO subfamily.

The protein resides in the nucleus. Its function is as follows. Probable acetyltransferase required for the establishment of sister chromatid cohesion and couple the processes of cohesion and DNA replication to ensure that only sister chromatids become paired together. In contrast to the structural cohesins, the deposition and establishment factors are required only during S phase. Acts by acetylating the cohesin complex component SMC3. The protein is N-acetyltransferase ECO1 (ECO1) of Candida glabrata (strain ATCC 2001 / BCRC 20586 / JCM 3761 / NBRC 0622 / NRRL Y-65 / CBS 138) (Yeast).